The following is a 341-amino-acid chain: S-adenosylmethionine:tRNA ribosyltransferase-isomerase (341 aa).

It belongs to the QueA family. In terms of assembly, monomer.

It localises to the cytoplasm. The catalysed reaction is 7-aminomethyl-7-carbaguanosine(34) in tRNA + S-adenosyl-L-methionine = epoxyqueuosine(34) in tRNA + adenine + L-methionine + 2 H(+). It participates in tRNA modification; tRNA-queuosine biosynthesis. Its function is as follows. Transfers and isomerizes the ribose moiety from AdoMet to the 7-aminomethyl group of 7-deazaguanine (preQ1-tRNA) to give epoxyqueuosine (oQ-tRNA). The sequence is that of S-adenosylmethionine:tRNA ribosyltransferase-isomerase from Desulfitobacterium hafniense (strain DSM 10664 / DCB-2).